We begin with the raw amino-acid sequence, 210 residues long: Protein HEADING DATE REPRESSOR 1 (210 aa).

A disordered region spans residues 1-97 (MEEPASADPP…GKRSSAEMLL (97 aa)). Residues 29–49 (QQELNKEAADEQLNNQAHEEA) adopt a coiled-coil conformation. Basic and acidic residues-rich tracts occupy residues 45-54 (AHEEAMKIDD) and 62-79 (DDVHPDPKANLSEKRKAL). Residues 129–184 (RRIAIQEMNRKDREINGLNEQLEEDSRVLELLQKQLADERKKRTEIEKENSMLHEQ) are a coiled coil.

In terms of assembly, interacts with OSK3 and OSK4. In terms of tissue distribution, mostly expressed in leaves, seedlings and floral organs, and, to a lower extent, in panicle, roots, nodes, internodes, leaf joint and sheath.

It is found in the nucleus. In terms of biological role, regulates flowering time via a photoperiod-dependent pathway. Suppressor of flowering that upregulates HD1 and down-regulates EHD1 in long days (LD), thus leading to the down-regulation of HD3A and RFT1. Triggers OSK4-mediated HD1 phosphorylation. The protein is Protein HEADING DATE REPRESSOR 1 of Oryza sativa subsp. japonica (Rice).